Reading from the N-terminus, the 427-residue chain is Serine--tRNA ligase 2 (427 aa).

Residues 35-53 (RRRSEAQAEVTRLRTELNR) show a composition bias toward basic and acidic residues. The disordered stretch occupies residues 35–72 (RRRSEAQAEVTRLRTELNRTSRARGRSGPPSEEEKEAA). L-serine is bound at residue 230–232 (TAE). Position 261–263 (261–263 (RAE)) interacts with ATP. Position 284 (E284) interacts with L-serine. 348 to 351 (EISS) is an ATP binding site. S383 contacts L-serine.

The protein belongs to the class-II aminoacyl-tRNA synthetase family. Type-1 seryl-tRNA synthetase subfamily. As to quaternary structure, homodimer. The tRNA molecule binds across the dimer.

The protein resides in the cytoplasm. The enzyme catalyses tRNA(Ser) + L-serine + ATP = L-seryl-tRNA(Ser) + AMP + diphosphate + H(+). It carries out the reaction tRNA(Sec) + L-serine + ATP = L-seryl-tRNA(Sec) + AMP + diphosphate + H(+). It participates in aminoacyl-tRNA biosynthesis; selenocysteinyl-tRNA(Sec) biosynthesis; L-seryl-tRNA(Sec) from L-serine and tRNA(Sec): step 1/1. In terms of biological role, catalyzes the attachment of serine to tRNA(Ser). Is also able to aminoacylate tRNA(Sec) with serine, to form the misacylated tRNA L-seryl-tRNA(Sec), which will be further converted into selenocysteinyl-tRNA(Sec). The chain is Serine--tRNA ligase 2 from Streptomyces avermitilis (strain ATCC 31267 / DSM 46492 / JCM 5070 / NBRC 14893 / NCIMB 12804 / NRRL 8165 / MA-4680).